Here is a 527-residue protein sequence, read N- to C-terminus: Serine/threonine-protein kinase NLK (527 aa).

Sufficient for interaction with DAPK3 regions lie at residues 1 to 125 and 124 to 416; these read MSLC…KAHH and HHHQ…SKRI. Required for interaction with TAB2 stretches follow at residues 1–304 and 434–527; these read MSLC…VVTQ and YHTC…LVWE. 2 disordered regions span residues 22–72 and 90–140; these read AAAA…SSAA and QQPY…DIEP. Positions 26 to 54 are enriched in basic residues; it reads GHHHHHHHHLPHLPPPHLHHHHHPQHHLH. Over residues 103 to 119 the composition is skewed to low complexity; the sequence is PGPAAAAPAQVQAAAAA. The span at 122 to 131 shows a compositional bias: basic residues; it reads KAHHHQHSHH. In terms of domain architecture, Protein kinase spans 138–427; sequence IEPDRPIGYG…AKDALAHPYL (290 aa). ATP is bound by residues 144-152 and Lys167; that span reads IGYGAFGVV. The active-site Proton acceptor is Asp264. Position 298 is a phosphothreonine; by autocatalysis (Thr298). The short motif at 298-300 is the TQE element; that stretch reads TQE. Residues 428-527 form a required for homodimerization and kinase activation and localization to the nucleus region; it reads DEGRLRYHTC…EMPPSPLVWE (100 aa). A Phosphoserine modification is found at Ser522.

It belongs to the protein kinase superfamily. CMGC Ser/Thr protein kinase family. MAP kinase subfamily. Homodimer. Homodimerization is required for intermolecular autophosphorylation, kinase activation and nuclear localization. May interact with components of cullin-RING-based SCF (SKP1-CUL1-F-box protein) E3 ubiquitin-protein ligase complexes. Interacts with LEF1, MEF2A, MYBL1 and MYBL2. Interacts with the upstream activating kinases HIPK2 and MAP3K7/TAK1. Interaction with MAP3K7/TAK1 seems to be indirect, and may be mediated by other proteins such as STAT3, TAB1 and TAB2. Interacts with and phosphorylates a number of transcription factors including FOXO1, FOXO3, FOXO4, MYB, NOTCH1 and TCF7L2/TCF4. Interacts with DAPK3/ZIPK, and this interaction may disrupt interaction with transcription factors such as TCF7L2/TCF4. Forms a transcriptional repressor complex with CHD7, PPARG and SETDB1. Interacts with RNF138/NARF. Interacts with ATF5; the interaction stabilizes ATF5 at the protein level in a kinase-independent manner. Mg(2+) is required as a cofactor. In terms of processing, phosphorylated on Thr-298. Intermolecular autophosphorylation on Thr-298 activates the enzyme.

It is found in the nucleus. Its subcellular location is the cytoplasm. It catalyses the reaction L-seryl-[protein] + ATP = O-phospho-L-seryl-[protein] + ADP + H(+). The enzyme catalyses L-threonyl-[protein] + ATP = O-phospho-L-threonyl-[protein] + ADP + H(+). Activated by the non-canonical Wnt signaling pathway, in which WNT5A leads to activation of MAP3K7/TAK1 and HIPK2, which subsequently phosphorylates and activates this protein. Activated by dimerization and subsequent intermolecular autophosphorylation on Thr-298. Other cytokines such as IL6 may also activate this regulatory circuit. Functionally, serine/threonine-protein kinase that regulates a number of transcription factors with key roles in cell fate determination. Positive effector of the non-canonical Wnt signaling pathway, acting downstream of WNT5A, MAP3K7/TAK1 and HIPK2. Negative regulator of the canonical Wnt/beta-catenin signaling pathway. Binds to and phosphorylates TCF7L2/TCF4 and LEF1, promoting the dissociation of the TCF7L2/LEF1/beta-catenin complex from DNA, as well as the ubiquitination and subsequent proteolysis of LEF1. Together these effects inhibit the transcriptional activation of canonical Wnt/beta-catenin target genes. Negative regulator of the Notch signaling pathway. Binds to and phosphorylates NOTCH1, thereby preventing the formation of a transcriptionally active ternary complex of NOTCH1, RBPJ/RBPSUH and MAML1. Negative regulator of the MYB family of transcription factors. Phosphorylation of MYB leads to its subsequent proteolysis while phosphorylation of MYBL1 and MYBL2 inhibits their interaction with the coactivator CREBBP. Other transcription factors may also be inhibited by direct phosphorylation of CREBBP itself. Acts downstream of IL6 and MAP3K7/TAK1 to phosphorylate STAT3, which is in turn required for activation of NLK by MAP3K7/TAK1. Upon IL1B stimulus, cooperates with ATF5 to activate the transactivation activity of C/EBP subfamily members. Phosphorylates ATF5 but also stabilizes ATF5 protein levels in a kinase-independent manner. Acts as an inhibitor of the mTORC1 complex in response to osmotic stress by mediating phosphorylation of RPTOR, thereby preventing recruitment of the mTORC1 complex to lysosomes. The protein is Serine/threonine-protein kinase NLK (NLK) of Canis lupus familiaris (Dog).